The chain runs to 319 residues: Triplex capsid protein 2 (319 aa).

Belongs to the herpesviridae TRX2 protein family. Interacts with TRX1 and major capisd protein/MCP.

The protein resides in the virion. It is found in the host nucleus. In terms of biological role, structural component of the T=16 icosahedral capsid. The capsid is composed of pentamers and hexamers of major capsid protein/MCP, which are linked together by heterotrimers called triplexes. These triplexes are formed by a single molecule of triplex protein 1/TRX1 and two copies of triplex protein 2/TRX2. Additionally, TRX1 is required for efficient transport of TRX2 to the nucleus, which is the site of capsid assembly. The polypeptide is Triplex capsid protein 2 (Gallid herpesvirus 2 (strain Chicken/Md5/ATCC VR-987) (GaHV-2)).